The sequence spans 272 residues: Undecaprenyl-diphosphatase (272 aa).

7 helical membrane-spanning segments follow: residues 39 to 59 (SGLTFDVALHFGTFLAIFVYF), 87 to 107 (WMIVLASIPAAIAGKTLEQPI), 113 to 133 (SSPLMIALMLILFGLGLGLTD), 145 to 165 (ITLGTAMLVGCFQCLALVPGV), 188 to 208 (FSFLLSLPIVFGAALLKGLHL), 220 to 240 (PMLVGVAVSAVVGYISVAFLL), and 251 to 271 (FVWYRVAAGIGVMALLGVGLL).

This sequence belongs to the UppP family.

The protein resides in the cell inner membrane. It carries out the reaction di-trans,octa-cis-undecaprenyl diphosphate + H2O = di-trans,octa-cis-undecaprenyl phosphate + phosphate + H(+). Its function is as follows. Catalyzes the dephosphorylation of undecaprenyl diphosphate (UPP). Confers resistance to bacitracin. The chain is Undecaprenyl-diphosphatase from Trichlorobacter lovleyi (strain ATCC BAA-1151 / DSM 17278 / SZ) (Geobacter lovleyi).